The chain runs to 474 residues: Cysteine--tRNA ligase (474 aa).

Cys-27 is a Zn(2+) binding site. The 'HIGH' region motif lies at 29–39 (ITPYDHMHVGH). Residues Cys-213, His-238, and Glu-242 each contribute to the Zn(2+) site. The short motif at 271-275 (KMSKS) is the 'KMSKS' region element. Lys-274 lines the ATP pocket.

It belongs to the class-I aminoacyl-tRNA synthetase family. Zn(2+) serves as cofactor.

It localises to the cytoplasm. It carries out the reaction tRNA(Cys) + L-cysteine + ATP = L-cysteinyl-tRNA(Cys) + AMP + diphosphate. The sequence is that of Cysteine--tRNA ligase from Pyrobaculum neutrophilum (strain DSM 2338 / JCM 9278 / NBRC 100436 / V24Sta) (Thermoproteus neutrophilus).